A 44-amino-acid chain; its full sequence is Photosystem I reaction center subunit IX (44 aa).

Residues 7-27 (YLSVAPVLSTLWFGSLAGLLI) traverse the membrane as a helical segment.

It belongs to the PsaJ family.

It localises to the plastid. The protein resides in the chloroplast thylakoid membrane. Its function is as follows. May help in the organization of the PsaE and PsaF subunits. The protein is Photosystem I reaction center subunit IX of Fagopyrum esculentum subsp. ancestrale (Wild buckwheat).